A 277-amino-acid chain; its full sequence is Ras suppressor protein 1 (277 aa).

A disordered region spans residues M1 to D24. An N-acetylserine modification is found at S2. Residues K7–D24 show a composition bias toward basic and acidic residues. LRR repeat units lie at residues H41–K63, N64–L85, K87–P109, A110–L133, T135–L156, K158–L179, and Q181–L202. Residues M250 to R277 form a disordered region. The segment covering P256–K265 has biased composition (basic and acidic residues).

Functionally, potentially plays a role in the Ras signal transduction pathway. Capable of suppressing v-Ras transformation in vitro. The sequence is that of Ras suppressor protein 1 (RSU1) from Homo sapiens (Human).